The sequence spans 179 residues: Interleukin-22 (179 aa).

An N-terminal signal peptide occupies residues 1–33 (MAALQKSVSSFLMGTLATSCLLLLALLVQGGAA). 2 disulfides stabilise this stretch: C40–C132 and C89–C178. N54, N68, and N97 each carry an N-linked (GlcNAc...) asparagine glycan.

Belongs to the IL-10 family.

It is found in the secreted. Its function is as follows. Cytokine that plays a critical role in modulating tissue responses during inflammation. Plays an essential role in the regeneration of epithelial cells to maintain barrier function after injury and for the prevention of further tissue damage. Unlike most of the cytokines, has no effect on immune cells. Signals through a heterodimeric receptor composed of two subunits, the specific receptor IL22RA1 which is present on non-immune cells in many organs and the shared subunit IL10RB. Ligation of IL22RA1 with IL22 induces activation of the tyrosine kinases JAK1 and TYK2, which in turn activates STAT3. In turn, promotes cell survival and proliferation through STAT3, ERK1/2 and PI3K/AKT pathways. Promotes phosphorylation of GSK3B at 'Ser-9' and CTTN. Promotes epithelial cell spreading. In Homo sapiens (Human), this protein is Interleukin-22 (IL22).